We begin with the raw amino-acid sequence, 233 residues long: Uridylate kinase (233 aa).

ATP is bound at residue 9–10 (GS). Gly-43 contributes to the UMP binding site. 2 residues coordinate ATP: Gly-44 and Arg-48. Residues Asp-65 and 113 to 119 (VTPGQTT) contribute to the UMP site. ATP contacts are provided by Thr-139, Tyr-145, and Asp-148.

This sequence belongs to the UMP kinase family. In terms of assembly, homohexamer.

The protein resides in the cytoplasm. The enzyme catalyses UMP + ATP = UDP + ADP. Its pathway is pyrimidine metabolism; CTP biosynthesis via de novo pathway; UDP from UMP (UMPK route): step 1/1. With respect to regulation, inhibited by UTP. Functionally, catalyzes the reversible phosphorylation of UMP to UDP. This is Uridylate kinase from Methanosarcina barkeri (strain Fusaro / DSM 804).